Reading from the N-terminus, the 223-residue chain is Ribose-5-phosphate isomerase A (223 aa).

Residues 32–35, 85–88, and 98–101 contribute to the substrate site; these read TGST, DGAD, and KGGG. Catalysis depends on Glu107, which acts as the Proton acceptor. Lys125 is a binding site for substrate.

Belongs to the ribose 5-phosphate isomerase family. Homodimer.

It catalyses the reaction aldehydo-D-ribose 5-phosphate = D-ribulose 5-phosphate. It functions in the pathway carbohydrate degradation; pentose phosphate pathway; D-ribose 5-phosphate from D-ribulose 5-phosphate (non-oxidative stage): step 1/1. Functionally, catalyzes the reversible conversion of ribose-5-phosphate to ribulose 5-phosphate. This chain is Ribose-5-phosphate isomerase A, found in Stutzerimonas stutzeri (strain A1501) (Pseudomonas stutzeri).